The following is a 160-amino-acid chain: SsrA-binding protein (160 aa).

The protein belongs to the SmpB family.

The protein localises to the cytoplasm. Required for rescue of stalled ribosomes mediated by trans-translation. Binds to transfer-messenger RNA (tmRNA), required for stable association of tmRNA with ribosomes. tmRNA and SmpB together mimic tRNA shape, replacing the anticodon stem-loop with SmpB. tmRNA is encoded by the ssrA gene; the 2 termini fold to resemble tRNA(Ala) and it encodes a 'tag peptide', a short internal open reading frame. During trans-translation Ala-aminoacylated tmRNA acts like a tRNA, entering the A-site of stalled ribosomes, displacing the stalled mRNA. The ribosome then switches to translate the ORF on the tmRNA; the nascent peptide is terminated with the 'tag peptide' encoded by the tmRNA and targeted for degradation. The ribosome is freed to recommence translation, which seems to be the essential function of trans-translation. The chain is SsrA-binding protein from Sodalis glossinidius (strain morsitans).